Here is a 306-residue protein sequence, read N- to C-terminus: Tricarboxylate transporter FUM11 (306 aa).

3 Solcar repeats span residues 18 to 98, 109 to 195, and 206 to 292; these read SDTL…YQKL, FGIL…LKQV, and IGTV…VVEG. 6 consecutive transmembrane segments (helical) span residues 24 to 44, 67 to 87, 113 to 133, 170 to 189, 209 to 229, and 267 to 286; these read LVAG…AEFA, GLQW…KTSI, LAGF…SERI, GFWP…LGSY, VKTF…TQPL, and GAVA…FMVY.

This sequence belongs to the mitochondrial carrier (TC 2.A.29) family.

It is found in the mitochondrion inner membrane. The protein operates within mycotoxin biosynthesis. Tricarboxylate transporter; part of the gene cluster that mediates the biosynthesis of fumonisins B1 (FB1), B2 (FB2), B3 (FB3), and B4 (FB4), which are carcinogenic mycotoxins. Within the pathway, FUM11 is involved the addition of the tricarballylic moieties to the carbon backbone. FUM11 makes a tricarboxylic acid precursor available for fumonisin biosynthesis via its export from the mitochondria. The biosynthesis starts with the FUM1-catalyzed carbon chain assembly from one molecule of acetyl-CoA, eight molecules of malonyl-CoA, and two molecules of methionine (in S-adenosyl form). The C18 polyketide chain is released from the enzyme by a nucleophilic attack of a carbanion, which is derived from R-carbon of alanine by decarboxylation, on the carbonyl carbon of polyketide acyl chain. This step is catalyzed by the pyridoxal 5'-phosphate-dependent aminoacyl transferase FUM8. The resultant 3-keto intermediate is then stereospecifically reduced to a 3-hydroxyl product by reductase FUM13. Subsequent oxidations at C-10 by the cytochrome P450 monooxygenase FUM2, C-14 and C-15 by FUM6, FUM12 or FUM15, tricarballylic esterification of the hydroxyl groups on C-14 and C-15 by acyltransferase FUM14, and C-5 hydroxylation by 2-keto-glutarate-dependent dioxygenase FUM3 furnish the biosynthesis of fumonisins. The tricarballylic moieties are most likely derived from the citric acid cycle, and their addition to the carbon backbone may involve FUM7, FUM10, FUM11 and FUM14. The polypeptide is Tricarboxylate transporter FUM11 (Gibberella moniliformis (strain M3125 / FGSC 7600) (Maize ear and stalk rot fungus)).